Here is a 464-residue protein sequence, read N- to C-terminus: Probable LL-diaminopimelate aminotransferase, chloroplastic (464 aa).

The N-terminal 39 residues, methionine 1 to arginine 39, are a transit peptide targeting the chloroplast. Residue glycine 102 coordinates substrate. Residue tyrosine 132 participates in pyridoxal 5'-phosphate binding. The substrate site is built by glutamate 135, lysine 167, tyrosine 190, and asparagine 247. The pyridoxal 5'-phosphate site is built by asparagine 247, aspartate 275, tyrosine 278, serine 305, and serine 307. At lysine 308 the chain carries N6-(pyridoxal phosphate)lysine. Position 316 (arginine 316) interacts with pyridoxal 5'-phosphate. 2 residues coordinate substrate: asparagine 347 and arginine 442.

It belongs to the class-I pyridoxal-phosphate-dependent aminotransferase family. LL-diaminopimelate aminotransferase subfamily. Homodimer. Requires pyridoxal 5'-phosphate as cofactor.

It localises to the plastid. It is found in the chloroplast. It catalyses the reaction (2S,6S)-2,6-diaminopimelate + 2-oxoglutarate = (S)-2,3,4,5-tetrahydrodipicolinate + L-glutamate + H2O + H(+). Its pathway is amino-acid biosynthesis; L-lysine biosynthesis via DAP pathway; LL-2,6-diaminopimelate from (S)-tetrahydrodipicolinate (aminotransferase route): step 1/1. Functionally, required for lysine biosynthesis. Catalyzes the direct conversion of tetrahydrodipicolinate to LL-diaminopimelate, a reaction that requires three enzymes in E.coli. The chain is Probable LL-diaminopimelate aminotransferase, chloroplastic (AGD2) from Oryza sativa subsp. japonica (Rice).